The following is a 240-amino-acid chain: Ubiquinone biosynthesis O-methyltransferase (240 aa).

S-adenosyl-L-methionine-binding residues include R44, G64, D85, and M129.

The protein belongs to the methyltransferase superfamily. UbiG/COQ3 family.

The enzyme catalyses a 3-demethylubiquinol + S-adenosyl-L-methionine = a ubiquinol + S-adenosyl-L-homocysteine + H(+). It carries out the reaction a 3-(all-trans-polyprenyl)benzene-1,2-diol + S-adenosyl-L-methionine = a 2-methoxy-6-(all-trans-polyprenyl)phenol + S-adenosyl-L-homocysteine + H(+). It participates in cofactor biosynthesis; ubiquinone biosynthesis. Its function is as follows. O-methyltransferase that catalyzes the 2 O-methylation steps in the ubiquinone biosynthetic pathway. This chain is Ubiquinone biosynthesis O-methyltransferase, found in Shigella flexneri serotype 5b (strain 8401).